Here is a 305-residue protein sequence, read N- to C-terminus: UDP-N-acetylenolpyruvoylglucosamine reductase 2 (305 aa).

The FAD-binding PCMH-type domain occupies 33 to 197; sequence VGGKADVFVA…LEARFELEEG (165 aa). The active site involves arginine 176. Catalysis depends on serine 226, which acts as the Proton donor. Glutamate 296 is a catalytic residue.

The protein belongs to the MurB family. FAD is required as a cofactor.

The protein resides in the cytoplasm. It catalyses the reaction UDP-N-acetyl-alpha-D-muramate + NADP(+) = UDP-N-acetyl-3-O-(1-carboxyvinyl)-alpha-D-glucosamine + NADPH + H(+). The protein operates within cell wall biogenesis; peptidoglycan biosynthesis. Its function is as follows. Cell wall formation. This is UDP-N-acetylenolpyruvoylglucosamine reductase 2 from Bacillus thuringiensis subsp. konkukian (strain 97-27).